A 2074-amino-acid polypeptide reads, in one-letter code: Cell adhesion molecule Dscam2 (2074 aa).

An N-terminal signal peptide occupies residues 1 to 21 (MWISSRFFVILLLLNLDNTCS). The Extracellular segment spans residues 22-1619 (EPFEAHLRGP…QTTVIFANIN (1598 aa)). Ig-like C2-type domains are found at residues 31–120 (PGFV…RIVS), 238–326 (PSVV…LRLT), 330–417 (PIQV…AELQ), 422–516 (PPVL…ARLN), 521–607 (PYIR…GEVT), 612–698 (PSIE…IKYT), 707–802 (PRWI…LKVN), and 805–902 (PYFS…LQVQ). Disulfide bonds link Cys-53-Cys-109, Cys-259-Cys-310, Cys-352-Cys-400, Cys-444-Cys-500, Cys-541-Cys-590, Cys-633-Cys-686, Cys-728-Cys-783, and Cys-826-Cys-884. Fibronectin type-III domains follow at residues 907 to 1003 (PPSV…TEPQ), 1008 to 1108 (PPLS…TMED), 1113 to 1211 (PPED…SEED), and 1215 to 1311 (APAD…TNRI). The Ig-like C2-type 9 domain maps to 1312-1400 (PARIISFGGP…DRLTHTLIVQ (89 aa)). The cysteines at positions 1334 and 1382 are disulfide-linked. 2 consecutive Fibronectin type-III domains span residues 1402-1495 (PPTA…TQGQ) and 1496-1595 (SPGH…TKDG). The helical transmembrane segment at 1620–1640 (LLIPTIAAVSGMFCTIIMIIV) threads the bilayer. Residues 1641-2074 (CYRHMLKNAP…KFFTAPTLPK (434 aa)) are Cytoplasmic-facing. Disordered stretches follow at residues 1739–1766 (EGCS…HQRP), 1778–1917 (PFHN…KSIS), 1936–1974 (SPSI…SLKQ), and 2011–2074 (PSSQ…TLPK). Over residues 1757–1766 (THHHHHHQRP) the composition is skewed to basic residues. Residues 1831–1846 (AQSSTSSDLSPMSEQK) are compositionally biased toward polar residues. The segment covering 1848–1858 (LPRRGRSRYHH) has biased composition (basic residues). Residues 1859-1868 (QQYQFSTNTT) show a composition bias toward polar residues. 3 stretches are compositionally biased toward low complexity: residues 1875–1903 (NKMN…SNSN), 1942–1974 (QQQK…SLKQ), and 2036–2051 (SQQS…QQHP). Over residues 2055–2066 (LNPSTAMLSSKF) the composition is skewed to polar residues.

The protein localises to the membrane. Its function is as follows. Cell adhesion molecule. The chain is Cell adhesion molecule Dscam2 (Dscam2) from Drosophila melanogaster (Fruit fly).